Reading from the N-terminus, the 172-residue chain is Adenine phosphoribosyltransferase (172 aa).

The protein belongs to the purine/pyrimidine phosphoribosyltransferase family. In terms of assembly, homodimer.

It localises to the cytoplasm. It carries out the reaction AMP + diphosphate = 5-phospho-alpha-D-ribose 1-diphosphate + adenine. It participates in purine metabolism; AMP biosynthesis via salvage pathway; AMP from adenine: step 1/1. Functionally, catalyzes a salvage reaction resulting in the formation of AMP, that is energically less costly than de novo synthesis. In Polynucleobacter asymbioticus (strain DSM 18221 / CIP 109841 / QLW-P1DMWA-1) (Polynucleobacter necessarius subsp. asymbioticus), this protein is Adenine phosphoribosyltransferase.